The following is a 464-amino-acid chain: Asparagine--tRNA ligase (464 aa).

Belongs to the class-II aminoacyl-tRNA synthetase family. Homodimer.

The protein localises to the cytoplasm. The enzyme catalyses tRNA(Asn) + L-asparagine + ATP = L-asparaginyl-tRNA(Asn) + AMP + diphosphate + H(+). The protein is Asparagine--tRNA ligase of Clostridium botulinum (strain Eklund 17B / Type B).